A 945-amino-acid chain; its full sequence is Isoleucine--tRNA ligase 1 (945 aa).

Positions 66–76 (PYANGDIHLGH) match the 'HIGH' region motif. Glu581 provides a ligand contact to L-isoleucyl-5'-AMP. The 'KMSKS' region motif lies at 622–626 (KMSKS). Lys625 contributes to the ATP binding site. Residues Cys908, Cys911, Cys928, and Cys931 each coordinate Zn(2+).

This sequence belongs to the class-I aminoacyl-tRNA synthetase family. IleS type 1 subfamily. In terms of assembly, monomer. The cofactor is Zn(2+).

Its subcellular location is the cytoplasm. It carries out the reaction tRNA(Ile) + L-isoleucine + ATP = L-isoleucyl-tRNA(Ile) + AMP + diphosphate. In terms of biological role, catalyzes the attachment of isoleucine to tRNA(Ile). As IleRS can inadvertently accommodate and process structurally similar amino acids such as valine, to avoid such errors it has two additional distinct tRNA(Ile)-dependent editing activities. One activity is designated as 'pretransfer' editing and involves the hydrolysis of activated Val-AMP. The other activity is designated 'posttransfer' editing and involves deacylation of mischarged Val-tRNA(Ile). The sequence is that of Isoleucine--tRNA ligase 1 from Burkholderia pseudomallei (strain K96243).